A 366-amino-acid polypeptide reads, in one-letter code: Protein sigma-NS (366 aa).

The tract at residues 1-11 (MASSLRAAISK) is important for ssRNA-binding and formation of complexes.

Belongs to the orthoreovirus sigma-NS protein family. As to quaternary structure, homooligomer; in presence of RNA. Interacts with protein mu-NS; this interaction allows the localization of sigma-NS to the viral factories. Interacts with host G3BP1 (via C-terminus); this interaction induces the relocalization of G3BP1 and other SG proteins to the viral factories periphery.

The protein resides in the host cytoplasm. In terms of biological role, protein that binds to ssRNA and participates with protein mu-NS in forming the matrix of viral factories, which are large inclusions in the host cytoplasm where replication intermediates are assembled and viral RNA replication takes place. Plays a role in the inhibition of the integrated stress response (ISR) to escape from host cell translational shutoff. Participates in the disruption of stress granules (SG) through its association with host G3BP1 and mu-NS. The protein is Protein sigma-NS (S3) of Mammalia (T1L).